Consider the following 369-residue polypeptide: tRNA 2-selenouridine synthase (369 aa).

One can recognise a Rhodanese domain in the interval 15 to 138 (FIAGQPLIDL…MRQYLIGVIE (124 aa)). The active-site S-selanylcysteine intermediate is the C98.

Belongs to the SelU family. As to quaternary structure, monomer.

The catalysed reaction is 5-methylaminomethyl-2-thiouridine(34) in tRNA + selenophosphate + (2E)-geranyl diphosphate + H2O + H(+) = 5-methylaminomethyl-2-selenouridine(34) in tRNA + (2E)-thiogeraniol + phosphate + diphosphate. It carries out the reaction 5-methylaminomethyl-2-thiouridine(34) in tRNA + (2E)-geranyl diphosphate = 5-methylaminomethyl-S-(2E)-geranyl-thiouridine(34) in tRNA + diphosphate. The enzyme catalyses 5-methylaminomethyl-S-(2E)-geranyl-thiouridine(34) in tRNA + selenophosphate + H(+) = 5-methylaminomethyl-2-(Se-phospho)selenouridine(34) in tRNA + (2E)-thiogeraniol. It catalyses the reaction 5-methylaminomethyl-2-(Se-phospho)selenouridine(34) in tRNA + H2O = 5-methylaminomethyl-2-selenouridine(34) in tRNA + phosphate. Its function is as follows. Involved in the post-transcriptional modification of the uridine at the wobble position (U34) of tRNA(Lys), tRNA(Glu) and tRNA(Gln). Catalyzes the conversion of 2-thiouridine (S2U-RNA) to 2-selenouridine (Se2U-RNA). Acts in a two-step process involving geranylation of 2-thiouridine (S2U) to S-geranyl-2-thiouridine (geS2U) and subsequent selenation of the latter derivative to 2-selenouridine (Se2U) in the tRNA chain. This Shewanella sp. (strain MR-7) protein is tRNA 2-selenouridine synthase.